A 71-amino-acid chain; its full sequence is Alpha-cobratoxin (71 aa).

5 disulfides stabilise this stretch: Cys3-Cys20, Cys14-Cys41, Cys26-Cys30, Cys45-Cys56, and Cys57-Cys62.

The protein belongs to the three-finger toxin family. Long-chain subfamily. Type II alpha-neurotoxin sub-subfamily. Monomer, homo- or heterodimer with cytotoxins 1 (P60305), 2 (AC P01445), and 3 (AC P01446); disulfide-linked. Post-translationally, in homodimer alpha-cobratoxin, selective reduction of Cys(26)-Cys(30) in one subunit does not affect the activity against the alpha-7/CHRNA7 nAChR, whereas its reduction in both subunits almost prevents alpha-7/CHRNA7 nAChR recognition. On the contrary, reduction of one or both Cys(26)-Cys(30) disulfide bonds in the homodimer considerably potentiates inhibition of the alpha-3-beta-2/CHRNA3-CHRNB2 nAChR by the toxin. Expressed by the venom gland.

The protein resides in the secreted. Its function is as follows. Monomer: binds with high affinity to muscular (alpha-1-beta-1-gamma-delta/CHRNA1-CHRNB1-CHRNG-CHRND) nAChR (tested on Torpedo californica, Kd=0.2-4.5 nM) and neuronal alpha-7/CHRNA7 nicotinic acetylcholine receptors (Kd=13-105 nM). Also inhibits GABA(A) channels. Heteropentamer targets studied are composed of alpha-1-beta-3-gamma-2 (GABRA1-GABRB3-GABRG2) subunits (IC(50)=236 nM), alpha-1-beta-2-gamma-2 (GABRA1-GABRB2-GABRG2) subunits (IC(50)=469 nM), alpha-2-beta-2-gamma-2 (GABRA2-GABRB2-GABRG2) subunits (IC(50)=485 nM), alpha-5-beta-3-gamma-2 (GABRA5-GABRB3-GABRG2) subunits (IC(50)=635 nM), and alpha-2-beta-3-gamma-2 (GABRA2-GABRB3-GABRG2) subunits (IC(50)=1099 nM) (activated by 10 uM GABA). Functionally, homodimer: binds with high affinity (but lower than the monomeric form) to muscular (IC(50)=9.7 nM) and with low affinity to neuronal alpha-7/CHRNA7 nAChRs (IC(50)=1370 nM). However, it acquires (compared to the monomeric form) the capacity to block alpha-3/beta-2 (CHRNA3/CHRNB2) nAChRs. Heterodimer with cytotoxin 3 (AC P01446): is slightly more active than the homodimer in inhibiting alpha-7/CHRNA7 nAChR and is considerably more active in blocking the alpha-3-beta-2/CHRNA3-CHRNB2 nAChR. This chain is Alpha-cobratoxin, found in Naja kaouthia (Monocled cobra).